The sequence spans 1002 residues: Hypoxia up-regulated protein 1 (1002 aa).

The N-terminal stretch at Met-1 to Pro-23 is a signal peptide. Disordered regions lie at residues Leu-576 to Gln-698 and Lys-918 to Leu-1002. Positions Pro-643–Ser-675 are enriched in basic and acidic residues. A compositionally biased stretch (polar residues) spans Gly-933–Pro-947. Basic and acidic residues-rich tracts occupy residues Gly-951–Pro-962 and Ser-983–Leu-1002. The Prevents secretion from ER motif lies at Asn-999–Leu-1002.

The protein belongs to the heat shock protein 70 family.

The protein resides in the endoplasmic reticulum lumen. Functionally, has a pivotal role in cytoprotective cellular mechanisms triggered by oxygen deprivation. Promotes HSPA5/BiP-mediated ATP nucleotide exchange and thereby activates the unfolded protein response (UPR) pathway in the presence of endoplasmic reticulum stress. May play a role as a molecular chaperone and participate in protein folding. This chain is Hypoxia up-regulated protein 1 (HYOU1), found in Gallus gallus (Chicken).